The following is a 182-amino-acid chain: Small ribosomal subunit protein uS5 (182 aa).

Positions 16–79 (FVDRLVHINR…ESAKRGMIYV (64 aa)) constitute an S5 DRBM domain.

The protein belongs to the universal ribosomal protein uS5 family. In terms of assembly, part of the 30S ribosomal subunit. Contacts proteins S4 and S8.

With S4 and S12 plays an important role in translational accuracy. In terms of biological role, located at the back of the 30S subunit body where it stabilizes the conformation of the head with respect to the body. In Bartonella tribocorum (strain CIP 105476 / IBS 506), this protein is Small ribosomal subunit protein uS5.